The following is a 94-amino-acid chain: Non-specific lipid-transfer protein C4 (94 aa).

The signal sequence occupies residues 1-26 (MAASKGNAAAAACALVLVLLAVGAEA). Disulfide bonds link cysteine 34-cysteine 72, cysteine 44-cysteine 59, cysteine 60-cysteine 85, and cysteine 70-cysteine 92. The N-linked (GlcNAc...) asparagine glycan is linked to asparagine 91.

The protein belongs to the plant LTP family.

In terms of biological role, lipid-transfer protein that may be regulated by the transcription factor UDT1 in developing anthers and play a role in tapetum development. The polypeptide is Non-specific lipid-transfer protein C4 (Oryza sativa subsp. japonica (Rice)).